The sequence spans 436 residues: 3-ketoacyl-CoA thiolase (436 aa).

Catalysis depends on Cys99, which acts as the Acyl-thioester intermediate. Catalysis depends on proton acceptor residues His392 and Cys422.

The protein belongs to the thiolase-like superfamily. Thiolase family. As to quaternary structure, heterotetramer of two alpha chains (FadJ) and two beta chains (FadI).

Its subcellular location is the cytoplasm. The catalysed reaction is an acyl-CoA + acetyl-CoA = a 3-oxoacyl-CoA + CoA. Its pathway is lipid metabolism; fatty acid beta-oxidation. Functionally, catalyzes the final step of fatty acid oxidation in which acetyl-CoA is released and the CoA ester of a fatty acid two carbons shorter is formed. In Shewanella denitrificans (strain OS217 / ATCC BAA-1090 / DSM 15013), this protein is 3-ketoacyl-CoA thiolase.